We begin with the raw amino-acid sequence, 186 residues long: Peptidyl-tRNA hydrolase (186 aa).

Tyr14 contributes to the tRNA binding site. His19 (proton acceptor) is an active-site residue. Residues Tyr64, Asn66, and Asn112 each contribute to the tRNA site.

Belongs to the PTH family. As to quaternary structure, monomer.

It is found in the cytoplasm. It carries out the reaction an N-acyl-L-alpha-aminoacyl-tRNA + H2O = an N-acyl-L-amino acid + a tRNA + H(+). Hydrolyzes ribosome-free peptidyl-tRNAs (with 1 or more amino acids incorporated), which drop off the ribosome during protein synthesis, or as a result of ribosome stalling. In terms of biological role, catalyzes the release of premature peptidyl moieties from peptidyl-tRNA molecules trapped in stalled 50S ribosomal subunits, and thus maintains levels of free tRNAs and 50S ribosomes. This chain is Peptidyl-tRNA hydrolase, found in Mesoplasma florum (strain ATCC 33453 / NBRC 100688 / NCTC 11704 / L1) (Acholeplasma florum).